A 258-amino-acid chain; its full sequence is Acyl-[acyl-carrier-protein]--UDP-N-acetylglucosamine O-acyltransferase (258 aa).

It belongs to the transferase hexapeptide repeat family. LpxA subfamily. Homotrimer.

The protein localises to the cytoplasm. The enzyme catalyses a (3R)-hydroxyacyl-[ACP] + UDP-N-acetyl-alpha-D-glucosamine = a UDP-3-O-[(3R)-3-hydroxyacyl]-N-acetyl-alpha-D-glucosamine + holo-[ACP]. It participates in glycolipid biosynthesis; lipid IV(A) biosynthesis; lipid IV(A) from (3R)-3-hydroxytetradecanoyl-[acyl-carrier-protein] and UDP-N-acetyl-alpha-D-glucosamine: step 1/6. Its function is as follows. Involved in the biosynthesis of lipid A, a phosphorylated glycolipid that anchors the lipopolysaccharide to the outer membrane of the cell. This is Acyl-[acyl-carrier-protein]--UDP-N-acetylglucosamine O-acyltransferase from Myxococcus xanthus (strain DK1622).